Reading from the N-terminus, the 365-residue chain is G-protein coupled receptor 68 (365 aa).

Over 1–12 the chain is Extracellular; that stretch reads MGNITTENSSLS. Asparagine 3 and asparagine 8 each carry an N-linked (GlcNAc...) asparagine glycan. A helical transmembrane segment spans residues 13–49; that stretch reads CPIDHTIHQTLAPVVYVTVLVVGFPANCLSLYFGYLQ. Cystine bridges form between cysteine 13-cysteine 258 and cysteine 94-cysteine 172. At 50–53 the chain is on the cytoplasmic side; the sequence is IKAR. The chain crosses the membrane as a helical span at residues 54–84; the sequence is NELGVYLCNLTIADLFYICSLPFWLQYVLQH. Residues 85-89 lie on the Extracellular side of the membrane; the sequence is DDWSH. Residues 90–125 traverse the membrane as a helical segment; sequence GDLSCQVCGILLYENIYISVGFLCCISIDRYLAVAH. The Cytoplasmic segment spans residues 126–133; that stretch reads PFRFHQFR. The chain crosses the membrane as a helical span at residues 134–160; the sequence is TLKAAVGVSVLIWAKELLTSIYFLNHK. The Extracellular segment spans residues 161–176; sequence EVIEDEDQHRVCFEHY. The segment at 161–176 is extracellular loop 2 (ECL2); the sequence is EVIEDEDQHRVCFEHY. The chain crosses the membrane as a helical span at residues 177–214; that stretch reads PIQAWQRSINYYRFLVGFLFPICLLLASYQGILRAVRR. Over 215–218 the chain is Cytoplasmic; that stretch reads SHGT. Residues 219-254 traverse the membrane as a helical segment; the sequence is QKSRKDQIQRLVLSTVVIFLACFLPYHVLLLVRSLW. Topologically, residues 255–260 are extracellular; the sequence is ERNCEF. Residues 261–289 traverse the membrane as a helical segment; it reads AKSIFNVYHFSLLLTSFNCVADPVLYCFV. Residues 290–365 lie on the Cytoplasmic side of the membrane; sequence SETTHRDLAR…VGGPSTVGLA (76 aa).

This sequence belongs to the G-protein coupled receptor 1 family. As to expression, expressed in the lung, testis, heart, brain, spleen, thymus, brown fat, small intestine, colon, peripheral blood leukocytes, macrophages, stomach, ovary and white fat but not in the liver, kidney, and skeletal muscle. Expression in the prostate is weak but detectable. Specifically expressed in endothelial cells of small-diameter resistance arteries.

It localises to the cell membrane. Its activity is regulated as follows. Activated by a network of residues that connects an extracellular-facing cavity to Glu-149, a conserved charged residue buried in the transmembrane core of the receptor. Protonation likely drives conformational changes in extracellular loop 2 (ECL2), which stabilizes movement of transmembrane 3 (TM3) and a series of rearrangements that connect the extracellular-facing cavity to Glu-149, a residue only conserved in proton-sensing G-protein coupled receptors. Activated in an allosteric manner by divalent metal ions at the extracellular surface following the order: Cd(2+) &gt; Co(2+) &gt; Ni(2+) &gt; Zn(2+) &gt; Fe(2+) &gt; Ca(2+) &gt; Mg(2+). Activated by ogerin (ZINC67740571), a selective GPR68 positive allosteric modulator. Inhibited by small molecule GPR68-I, decreasing inflammation in models of colitis. Functionally, proton-sensing G-protein coupled receptor activated by extracellular pH, which is required to monitor pH changes and generate adaptive reactions. The receptor is almost silent at pH 7.8 but fully activated at pH 6.8. Ligand binding causes a conformation change that triggers signaling via guanine nucleotide-binding proteins (G proteins) and modulates the activity of downstream effectors, such as phospholipase C. GPR68 is mainly coupled to G(q) G proteins and mediates production of diacylglycerol (DAG) and inositol 1,4,5-trisphosphate (IP3). Acts as a key mechanosensor of fluid shear stress and membrane stretch. Expressed in endothelial cells of small-diameter resistance arteries, where it mediates flow-induced dilation in response to shear stress. May represents an osteoblastic pH sensor regulating cell-mediated responses to acidosis in bone. Acts as a regulator of calcium-sensing receptor CASR in a seesaw manner: GPR68-mediated signaling inhibits CASR signaling in response to protons, while CASR inhibits GPR68 in presence of extracellular calcium. Also functions as a metastasis suppressor gene in prostate cancer. The polypeptide is G-protein coupled receptor 68 (Mus musculus (Mouse)).